A 160-amino-acid polypeptide reads, in one-letter code: Cytochrome c-type biogenesis protein CcmE (160 aa).

At 1–8 the chain is on the cytoplasmic side; the sequence is MNPRRKKR. A helical; Signal-anchor for type II membrane protein membrane pass occupies residues 9 to 29; it reads LGIILAIFFGISATVGLMVYA. At 30–160 the chain is on the periplasmic side; that stretch reads LNQNMDLFYT…TTEQKEGNAQ (131 aa). His-128 and Tyr-132 together coordinate heme.

The protein belongs to the CcmE/CycJ family.

The protein localises to the cell inner membrane. Heme chaperone required for the biogenesis of c-type cytochromes. Transiently binds heme delivered by CcmC and transfers the heme to apo-cytochromes in a process facilitated by CcmF and CcmH. The chain is Cytochrome c-type biogenesis protein CcmE from Vibrio atlanticus (strain LGP32) (Vibrio splendidus (strain Mel32)).